Consider the following 511-residue polypeptide: FAD-dependent monooxygenase AOL_s00215g279 (511 aa).

An N-terminal signal peptide occupies residues 1–17 (MRFTLYGLLGFASLLHA). Residues 85–256 (CWVNPACIVS…TEFDLRTRYS (172 aa)) form the FAD-binding PCMH-type domain. Histidine 122 bears the Pros-8alpha-FAD histidine mark.

Belongs to the oxygen-dependent FAD-linked oxidoreductase family.

The protein operates within secondary metabolite biosynthesis; terpenoid biosynthesis. FAD-dependent monooxygenase; part of the gene cluster that mediates the biosynthesis of sesquiterpenyl epoxy-cyclohexenoids (SECs) such as anthrobotrisins and arthrosporols, metabolites that possess a novel hybrid carbon skeleton consisting of a polyketide-derived epoxycyclohexenol combined with a terpenoid-derived monocyclic sesquiterpenol substructure (PKS-PTS hybrid). The SEC pathway plays an important role for fungal soil colonization via decreasing fungal nematode-capturing ability. Within the pathway, the FAD-dependent monooxygenase AOL_s00215g279 plays a role in the oxygenation of the phenol moiety, most likely in the epoxy formation. The pathway begins with the biosynthesis of 6-methylsalicylic acid (6-MSA), the first precursor of the polyketide-derived epoxycyclohexenol in arthrosporols, by the polyketide synthase (PKS) AOL_s00215g283 via condensation of 1 acetate and 3 malonate units. The 6-methylsalicylic acid decarboxylase AOL_s00215g281 then catalyzes the decarboxylation of 6-methylsalicylic acid to yield m-cresol. The cytochrome P450 monooxygenase AOL_s00215g282 further oxidizes m-cresol to yield toluquinol. With the assistance of the oxidoreductase AOL_s00215g277, the polyprenyl transferase AOL_s00215g276 catalyzes the farnesylation of toluquinol to produce farnesyl hydroquinone, the hybrid precursor for biosynthesis of SECs. Farnesyl hydroquinone undergoes epoxidation and then subsequent dehydrogenation to form farnesyl epoxy-quinone, the first and simplest SEC. The cytochrome P450 monooxygenase AOL_s00215g278 and the FAD-dependent monooxygenase AOL_s00215g279 might be involved in the oxygenation of the phenol moiety, most likely in the epoxy formation. The cytochrome P450 monooxygenases AOL_s00215g274 and AOL_s00215g280 are involved in specific regional ketone reductions at respectively C-4 and C-1 of farnesyl epoxy-quinone PubMed:33823587. The polypeptide is FAD-dependent monooxygenase AOL_s00215g279 (Arthrobotrys oligospora (strain ATCC 24927 / CBS 115.81 / DSM 1491) (Nematode-trapping fungus)).